Consider the following 152-residue polypeptide: MSLVIPEKFQHILRVLNTNIDGRRKIAFAITAIKGVGRRYAHVVLRKADIDLSKRAGELTEDEVERVVTIMQNPRQYKIPDWFLNRQKDVKDGKYSQVLANGLDNKLREDLERLKKIRAHRGLRHFWGLRVRGQHTKTTGRRGRTVGVSKKK.

The protein belongs to the universal ribosomal protein uS13 family. In terms of assembly, component of the small ribosomal subunit.

The protein localises to the cytoplasm. Its function is as follows. Component of the small ribosomal subunit. The ribosome is a large ribonucleoprotein complex responsible for the synthesis of proteins in the cell. In Ictalurus punctatus (Channel catfish), this protein is Small ribosomal subunit protein uS13 (rps18).